A 256-amino-acid chain; its full sequence is Cell division protein FtsQ (256 aa).

Topologically, residues 1–23 (MIKAVKMNTSFDKEKVRKHLPGA) are cytoplasmic. A helical membrane pass occupies residues 24-44 (IFLSLVVITSLWLVISTISWM). Topologically, residues 45 to 256 (TDEDRLPLSH…SDDVENKEEN (212 aa)) are periplasmic. In terms of domain architecture, POTRA spans 50-120 (LPLSHMIIQG…ETIKVFVVEH (71 aa)).

The protein belongs to the FtsQ/DivIB family. FtsQ subfamily. As to quaternary structure, part of a complex composed of FtsB, FtsL and FtsQ.

It localises to the cell inner membrane. Its function is as follows. Essential cell division protein. May link together the upstream cell division proteins, which are predominantly cytoplasmic, with the downstream cell division proteins, which are predominantly periplasmic. May control correct divisome assembly. The polypeptide is Cell division protein FtsQ (Aliivibrio fischeri (strain ATCC 700601 / ES114) (Vibrio fischeri)).